The primary structure comprises 192 residues: Thymidylate kinase (192 aa).

Position 7-14 (7-14) interacts with ATP; the sequence is GIDCVGKS.

Belongs to the thymidylate kinase family.

It catalyses the reaction dTMP + ATP = dTDP + ADP. Functionally, phosphorylation of dTMP to form dTDP in both de novo and salvage pathways of dTTP synthesis. The polypeptide is Thymidylate kinase (Campylobacter jejuni subsp. jejuni serotype O:6 (strain 81116 / NCTC 11828)).